Consider the following 484-residue polypeptide: Cobyric acid synthase (484 aa).

The GATase cobBQ-type domain occupies 251-438 (ALKIAVPVLP…LHGLFGSDAY (188 aa)). The active-site Nucleophile is the Cys333. Residue His430 is part of the active site.

Belongs to the CobB/CobQ family. CobQ subfamily.

It functions in the pathway cofactor biosynthesis; adenosylcobalamin biosynthesis. In terms of biological role, catalyzes amidations at positions B, D, E, and G on adenosylcobyrinic A,C-diamide. NH(2) groups are provided by glutamine, and one molecule of ATP is hydrogenolyzed for each amidation. In Rhizobium leguminosarum bv. trifolii (strain WSM2304), this protein is Cobyric acid synthase.